We begin with the raw amino-acid sequence, 390 residues long: Malonyl-CoA-acyl carrier protein transacylase, mitochondrial (390 aa).

A mitochondrion-targeting transit peptide spans 1–21 (MSVRVARVAWVRGLGASYRRG). Active-site residues include Ser-153 and His-270. At Lys-314 the chain carries N6-succinyllysine.

This sequence belongs to the type II malonyltransferase family.

It is found in the mitochondrion. The catalysed reaction is holo-[ACP] + malonyl-CoA = malonyl-[ACP] + CoA. Its pathway is lipid metabolism; fatty acid biosynthesis. Catalyzes the transfer of a malonyl moiety from malonyl-CoA to the free thiol group of the phosphopantetheine arm of the mitochondrial ACP protein (NDUFAB1). This suggests the existence of the biosynthesis of fatty acids in mitochondria. Also acts as a mitochondrial small ribosomal subunit (mt-SSU) assembly factor. This is Malonyl-CoA-acyl carrier protein transacylase, mitochondrial from Homo sapiens (Human).